Here is a 380-residue protein sequence, read N- to C-terminus: Glucose-1-phosphate adenylyltransferase (380 aa).

Alpha-D-glucose 1-phosphate contacts are provided by residues G164, 179-180, and S190; that span reads EK.

The protein belongs to the bacterial/plant glucose-1-phosphate adenylyltransferase family. Homotetramer.

It catalyses the reaction alpha-D-glucose 1-phosphate + ATP + H(+) = ADP-alpha-D-glucose + diphosphate. Its pathway is glycan biosynthesis; glycogen biosynthesis. Functionally, involved in the biosynthesis of ADP-glucose, a building block required for the elongation reactions to produce glycogen. Catalyzes the reaction between ATP and alpha-D-glucose 1-phosphate (G1P) to produce pyrophosphate and ADP-Glc. This Streptococcus sanguinis (strain SK36) protein is Glucose-1-phosphate adenylyltransferase.